Consider the following 495-residue polypeptide: Keratin, type II cuticular 87 (495 aa).

Residues 1–111 (MSCFSSRLGA…PNAQCVKHEE (111 aa)) form a head region. The 312-residue stretch at 111 to 422 (EKEQIKCLNS…RLLEGEEQRL (312 aa)) folds into the IF rod domain. The segment at 112 to 146 (KEQIKCLNSKFAAFIDKVRFLEQQNKLLETKWQFY) is coil 1A. A linker 1 region spans residues 147–156 (QNRKCCESNM). The tract at residues 157-257 (EPLFEGYIEA…YEEETRLLHS (101 aa)) is coil 1B. The linker 12 stretch occupies residues 258 to 274 (HISDTSVVVKMDNSRDL). The tract at residues 275-418 (NMDCVVAEIK…ITYRRLLEGE (144 aa)) is coil 2. The interval 419–494 (EQRLCEGVGS…TCGSSRSVRF (76 aa)) is tail.

Belongs to the intermediate filament family. In terms of assembly, heterotetramer of two type I and two type II keratins.

The sequence is that of Keratin, type II cuticular 87 from Mus musculus (Mouse).